Reading from the N-terminus, the 33-residue chain is Rugosin-B (33 aa).

Cysteines 27 and 33 form a disulfide.

Belongs to the frog skin active peptide (FSAP) family. Brevinin subfamily. Expressed by the skin glands.

The protein resides in the secreted. Shows antibacterial activity against both Gram-negative and Gram-positive bacteria. This Glandirana rugosa (Japanese wrinkled frog) protein is Rugosin-B.